The sequence spans 966 residues: Receptor protein-tyrosine kinase CEPR1 (966 aa).

Positions 1 to 22 (MRLKNFPFFVLFFFFCFNSNQS) are cleaved as a signal peptide. Over 23-592 (WGLMSSNQQP…QEPHGKKKLS (570 aa)) the chain is Extracellular. Asn61 is a glycosylation site (N-linked (GlcNAc...) asparagine). LRR repeat units lie at residues 70–94 (QGLV…VCSY), 95–120 (FPNL…TIPN), 122–144 (SLLR…FSQM), 145–168 (KSLR…IFNL), 170–194 (DLEY…VSKL), 195–218 (TKLT…IGNL), 219–242 (TSLV…IGNL), 245–267 (LRQL…IGNL), 268–291 (KNLT…ICSL), 292–315 (PNLR…LGNS), 317–339 (TLKI…LGSS), 341–363 (PMIA…VCKS), 365–386 (KLLY…TYGS), 387–411 (CKTL…VMSL), 412–435 (PHVS…IGNA), 437–459 (NLSE…LSHS), 460–483 (TNLV…VGRL), 484–507 (RKLN…LSNL), 508–531 (KSLN…LSEL), and 533–554 (PTSI…LIRG). N-linked (GlcNAc...) asparagine glycans are attached at residues Asn109, Asn120, Asn128, and Asn167. 2 N-linked (GlcNAc...) asparagine glycosylation sites follow: Asn217 and Asn241. Residues Asn269 and Asn301 are each glycosylated (N-linked (GlcNAc...) asparagine). An N-linked (GlcNAc...) asparagine glycan is attached at Asn437. N-linked (GlcNAc...) asparagine glycosylation is found at Asn527 and Asn537. A helical transmembrane segment spans residues 593-613 (SIWAILVSVFILVLGVIMFYL). Over 614-966 (RQRMSKNRAV…VSDHLTQTRL (353 aa)) the chain is Cytoplasmic. In terms of domain architecture, Protein kinase spans 656–934 (LVDKNIVGHG…TMNEVVQLLI (279 aa)). Residues 662–670 (VGHGGSGTV) and Lys684 each bind ATP. 2 positions are modified to phosphotyrosine: Tyr738 and Tyr775. Asp788 acts as the Proton acceptor in catalysis. Residues Tyr831 and Tyr838 each carry the phosphotyrosine modification. The disordered stretch occupies residues 937–966 (TPQGGPDMTSKPTTKIKDSIVSDHLTQTRL).

The protein belongs to the protein kinase superfamily. Ser/Thr protein kinase family. As to quaternary structure, interacts with the root-derived peptides CEP1, CEP3 and CEP5. As to expression, expressed in the vasculature, especially in phloem and procambium regions, of stems, leaves, cotyledons, sepals, pedals, pedicels, hypocotyls and roots (in primary and lateral roots, but not in root tips). Expressed in the root from the basal meristem onward. Present in the phloem pole pericycle and in the adjacent phloem.

It is found in the cell membrane. The enzyme catalyses L-tyrosyl-[protein] + ATP = O-phospho-L-tyrosyl-[protein] + ADP + H(+). In terms of biological role, receptor kinase involved in the perception of C-terminally encoded plant signaling peptide (CEP) and subsequent regulation of root and shoot development. Required for xylem and phloem cell files morphology and organization, probably by preventing ectopic lignification in phloem cells. Together with CEPR2, mediates systemic nitrogen (N)-demand signaling upon the perception of root-derived peptides (e.g. CEP1) via the up-regulation of genes involved in N uptake and assimilation pathways. Positively regulates lateral root initiation and development; probably repressed by the signaling peptide CEP5. The protein is Receptor protein-tyrosine kinase CEPR1 of Arabidopsis thaliana (Mouse-ear cress).